The following is a 62-amino-acid chain: Agnoprotein (62 aa).

The Cytoplasmic portion of the chain corresponds to 1 to 23; it reads MVLRRLSRQASVKVRRSWTESKK. A helical; Signal-anchor for type II membrane protein membrane pass occupies residues 24–40; it reads TAQRLFVFVLELLLQFC. Topologically, residues 41–62 are extracellular; the sequence is EGEDTVDGKRKKPERLTEKPES.

This sequence belongs to the polyomaviruses agnoprotein family. Homooligomer. Interacts with VP1. Interacts with large T antigen; this interaction may impact upon the activity of T-antigen on the control of viral gene transcription and replication. Interacts with small t antigen. Interacts with host CBX5; this interaction induces the dissociation of CBX5 from LBR, resulting in destabilization of the nuclear envelope. In terms of processing, phosphorylated by host kinase. Phosphorylation segregates agnoprotein in cytoplasm, whereas unphosphorylated agnoprotein migrate to the nucleus.

The protein resides in the host cytoplasm. Its subcellular location is the host nucleus membrane. It localises to the host rough endoplasmic reticulum membrane. The protein localises to the host cell membrane. Its function is as follows. Alters the structure of the nuclear envelope by interacting with host CBX5 and disrupting CBX5 association with LBR. Involved in the perinuclear-nuclear localization of the capsid protein VP1 during virion assembly and maturation. Plays an important role in the release of progeny virions from infected cells and in viral propagation, probably by acting as a viral ionic channel in the host plasma membrane. Allows influx of extracellular calcium ions in the host cell. May contribute to viral genome transcription and translation of viral late proteins. This chain is Agnoprotein, found in Simian virus 40 (SV40).